The sequence spans 89 residues: Small ribosomal subunit protein uS15 (89 aa).

It belongs to the universal ribosomal protein uS15 family. In terms of assembly, part of the 30S ribosomal subunit. Forms a bridge to the 50S subunit in the 70S ribosome, contacting the 23S rRNA.

Functionally, one of the primary rRNA binding proteins, it binds directly to 16S rRNA where it helps nucleate assembly of the platform of the 30S subunit by binding and bridging several RNA helices of the 16S rRNA. In terms of biological role, forms an intersubunit bridge (bridge B4) with the 23S rRNA of the 50S subunit in the ribosome. This chain is Small ribosomal subunit protein uS15, found in Salmonella schwarzengrund (strain CVM19633).